Here is a 389-residue protein sequence, read N- to C-terminus: ATP phosphoribosyltransferase regulatory subunit (389 aa).

Belongs to the class-II aminoacyl-tRNA synthetase family. HisZ subfamily. Heteromultimer composed of HisG and HisZ subunits.

The protein localises to the cytoplasm. It functions in the pathway amino-acid biosynthesis; L-histidine biosynthesis; L-histidine from 5-phospho-alpha-D-ribose 1-diphosphate: step 1/9. Functionally, required for the first step of histidine biosynthesis. May allow the feedback regulation of ATP phosphoribosyltransferase activity by histidine. This Hydrogenovibrio crunogenus (strain DSM 25203 / XCL-2) (Thiomicrospira crunogena) protein is ATP phosphoribosyltransferase regulatory subunit.